Reading from the N-terminus, the 153-residue chain is Flagellar assembly factor FliW (153 aa).

This sequence belongs to the FliW family. In terms of assembly, interacts with translational regulator CsrA and flagellin(s).

The protein localises to the cytoplasm. Functionally, acts as an anti-CsrA protein, binds CsrA and prevents it from repressing translation of its target genes, one of which is flagellin. Binds to flagellin and participates in the assembly of the flagellum. This is Flagellar assembly factor FliW from Leptospira biflexa serovar Patoc (strain Patoc 1 / Ames).